Consider the following 501-residue polypeptide: MVTNMVKLRNLRRLYCSSRLLRTIQNGRISSVSSISLSKKYTTKSAKEGEENVERKHEEEKKDTLKSSSVPTSRISRLFHYGSLAAGVGMNAAAKGISEVAKGNSPTWKSLILSDSNIDRITNKFSKMRGVALKIGQLLSFQDEKVLPKELYEILSRVQNSANHMPQRQLEKVMAKELGANWKTKFSKFDKIPMAAASIGQVHAAELPSGQRVVVKIQYPGVKESIDSDLNSLLMLLTASSLLPKGLFLDKTIANARTELKWECDYNREARALQKFEALLKDDPAFEVPHVFPEYTTDNIITMTRMEGTEIMKLPKASQETKNFISENIMRLCLEEIATFKYMQTDPNWANFLYNGRTKKIELLDFGASRPFAEDFILKYRKLLTYATLRDRKGAYEMSVQLGYLTGLESQSMKDAHVDSVLTLGEPFRGDVDKSFDFKDQTVSDRIRGNIGLMLNERLCPPPEETYSLHRKFSGIFLLCARMGASVHCAKLFKEIFAYKV.

The transit peptide at 1 to 29 (MVTNMVKLRNLRRLYCSSRLLRTIQNGRI) directs the protein to the mitochondrion. Residues 41–69 (YTTKSAKEGEENVERKHEEEKKDTLKSSS) form a disordered region. Residues 45-65 (SAKEGEENVERKHEEEKKDTL) are compositionally biased toward basic and acidic residues. The KxGQ motif motif lies at 134–137 (KIGQ). The Protein kinase domain maps to 188-501 (KFDKIPMAAA…LFKEIFAYKV (314 aa)). The AAAS motif signature appears at 195 to 198 (AAAS). Residues S198, K216, and 303-306 (MTRM) contribute to the ATP site. The active-site Proton acceptor is D346. The ATP site is built by N351 and D365.

Belongs to the protein kinase superfamily. ADCK protein kinase family. As to quaternary structure, forms homopolymers. Predominantly associated with a complex of about 500 kDa.

It localises to the mitochondrion inner membrane. Its pathway is cofactor biosynthesis; ubiquinone biosynthesis. Atypical kinase involved in the biosynthesis of coenzyme Q, also named ubiquinone, an essential lipid-soluble electron transporter for aerobic cellular respiration. Its substrate specificity is still unclear: may act as a protein kinase that mediates phosphorylation of COQ3, COQ5 and/or COQ7. According to other reports, acts as a small molecule kinase, possibly a lipid kinase that phosphorylates a prenyl lipid in the ubiquinone biosynthesis pathway, as suggested by its ability to bind coenzyme Q lipid intermediates. This Saccharomyces cerevisiae (strain ATCC 204508 / S288c) (Baker's yeast) protein is Atypical kinase COQ8, mitochondrial (COQ8).